A 316-amino-acid chain; its full sequence is MVTQALLPSGLVASAVVAASSANLGPGFDSVGLALSLYDEIIVETTDSGLTVTVDGEGGDQVPLGPEHLVVRAVQHGLQAAGVSAAGLAVRCRNAIPHSRGLGSSAAAVVGGLAAVNGLVVQTDSSPSSDAELIQLASEFEGHPDNAAAAVLGGAVVSWTDHSGDRPNYSAVSLRLHPDIRLFTAIPEQRSSTAETRVLLPAQVSHDDARFNVSRAALLVVALTERPDLLMAATEDLLHQPQRAAAMTASAEYLRLLRRHNVAAALSGAGPSLIALSTDSELPTDAVEFGAAKGFAVTELTVGEAVRWSPTVRVPG.

97–107 (PHSRGLGSSAA) contacts ATP.

This sequence belongs to the GHMP kinase family. Homoserine kinase subfamily.

The protein localises to the cytoplasm. The catalysed reaction is L-homoserine + ATP = O-phospho-L-homoserine + ADP + H(+). The protein operates within amino-acid biosynthesis; L-threonine biosynthesis; L-threonine from L-aspartate: step 4/5. Functionally, catalyzes the ATP-dependent phosphorylation of L-homoserine to L-homoserine phosphate. This Mycobacterium tuberculosis (strain ATCC 25618 / H37Rv) protein is Homoserine kinase.